A 262-amino-acid polypeptide reads, in one-letter code: Ankyrin repeat domain-containing protein 7 (262 aa).

ANK repeat units lie at residues 67-96 (KYRT…KINI), 100-129 (ENKS…DPNL), 133-162 (RYNT…DLEA), 166-195 (DGYT…DVNA), and 199-228 (YQRT…ELSC).

The protein is Ankyrin repeat domain-containing protein 7 (ANKRD7) of Macaca fascicularis (Crab-eating macaque).